The chain runs to 805 residues: MSHLVSSSLGTTTTATPTSRSPHTNHSTPYNQNSITSNRSSPVPKNSVNSRIIPQTMNPPIDMKSNNILNPEKDTDTSRGDHSESKASSISSASGTTTTNNNNVSNNNSTGKTQIVFIHKLYDMLHDESISHLIWWSPSLDSFYVTPGEEFSRVLSQYFKHTNIASFIRQLNMYGFHKVNEPFLNQDDQQQQQQLQSNRWEFRHSTNQFRKGDTESLKNIKRRSSKTLNAQKEVVNIKSLPPTSHPMEYNTGYSYQNEDSAHYFVHHHSITTMQSPADMRPRSPSTPIPMQPLAQQQQQQQQQQQQQQQQLPSQPVPNGPPVFSGPIPPGAVNQSPQEYLTRPSILNNVQGSFENATNFKFVELTNQINLLRNDFFTMNNRYEILQNELKYQTADSMAVLEILEKLSNDNRIATDIRDLKNVVSQRMQRLNNQFIPQQSNFAPHIPGQQQQQQHGNSVSSNYHLESTNVSRNPSTTNLNVAPQPYPLNPHYTIYANNRASGSSEINNGVFRAREDSNNSKRNLSVYDPLQPVPSRNSSRILIEESTPTHPPTNFNPQQSQSQSQVQLGPAMPPQGFRNRAESTYSPLSHSSNKSQILNKAPTPVNHSPLVQQQQKEAKQELNDSSVAPPSQSSLPVTRPLSRQQQQQQQTLHHPSTTSSRTNSLPNPVAEHPAPQSSYFMQRNSFNTVYEHQKSLRVPSPKRVRYATPPRSIPEQPISSTAPTTMITSTSKPTSTSGAAISRSENHSVVSLTGGALPSVSELDKSIRTGSSVSLPPIKSIKDNDNKNDNGNSDDNGNDHKKRKLE.

Low complexity predominate over residues 1–24 (MSHLVSSSLGTTTTATPTSRSPHT). A disordered region spans residues 1 to 110 (MSHLVSSSLG…NNNVSNNNST (110 aa)). A compositionally biased stretch (polar residues) spans 25–69 (NHSTPYNQNSITSNRSSPVPKNSVNSRIIPQTMNPPIDMKSNNIL). Basic and acidic residues predominate over residues 71 to 85 (PEKDTDTSRGDHSES). The span at 86 to 110 (KASSISSASGTTTTNNNNVSNNNST) shows a compositional bias: low complexity. The DNA-binding element occupies 117-226 (FIHKLYDMLH…LKNIKRRSSK (110 aa)). Disordered stretches follow at residues 273–336 (MQSP…NQSP), 438–483 (QSNF…VAPQ), 513–675 (REDS…PAPQ), 691–746 (HQKS…SENH), and 759–805 (VSEL…RKLE). Over residues 295–310 (QQQQQQQQQQQQQQQQ) the composition is skewed to low complexity. Composition is skewed to polar residues over residues 454–480 (HGNS…NLNV) and 533–556 (PSRN…NFNP). Over residues 557–566 (QQSQSQSQVQ) the composition is skewed to low complexity. Composition is skewed to polar residues over residues 581–597 (ESTY…SQIL), 604–614 (VNHSPLVQQQQ), and 622–635 (NDSS…SSLP). Over residues 637–659 (TRPLSRQQQQQQQTLHHPSTTSS) the composition is skewed to low complexity. A compositionally biased stretch (polar residues) spans 716–738 (PISSTAPTTMITSTSKPTSTSGA).

The protein belongs to the HSF family.

The protein localises to the nucleus. Functionally, transcription factor that plays a role of repressor of filamentous growth and flocculation. Antagonizes functions of SFL2 and FLO8. Plays a role in the hyphal repression induced by secreted factors like dodecanol by competitors such as Pseudomonas aeruginosa and Burkholderia cenocepacia. In Candida albicans (strain SC5314 / ATCC MYA-2876) (Yeast), this protein is Transcription factor SFL1 (SFL1).